We begin with the raw amino-acid sequence, 110 residues long: MEVLAKHRFARTSPQKCRLVADQIRGLPVAKALEILTFSPKKAAVLVKKVLDSAIANAEHNEGADIDELRVGAIMIDEGPTMKRIMPRAKGRADRIIKRTSHITVVVSDR.

It belongs to the universal ribosomal protein uL22 family. Part of the 50S ribosomal subunit.

In terms of biological role, this protein binds specifically to 23S rRNA; its binding is stimulated by other ribosomal proteins, e.g. L4, L17, and L20. It is important during the early stages of 50S assembly. It makes multiple contacts with different domains of the 23S rRNA in the assembled 50S subunit and ribosome. The globular domain of the protein is located near the polypeptide exit tunnel on the outside of the subunit, while an extended beta-hairpin is found that lines the wall of the exit tunnel in the center of the 70S ribosome. The sequence is that of Large ribosomal subunit protein uL22 from Shewanella halifaxensis (strain HAW-EB4).